A 366-amino-acid polypeptide reads, in one-letter code: Histone-lysine N-methyltransferase SETD7 (366 aa).

3 MORN repeats span residues 36 to 58 (FEGNFVHGEKNGRGKFFFFDGST), 59 to 81 (LEGYYVDDALQGQGVYTYEDGGV), and 106 to 128 (FKGQYKDNIRHGVCWIYYPDGGS). Residues 214–336 (ERVYVAESLI…ADEELTVAYG (123 aa)) enclose the SET domain. S-adenosyl-L-methionine is bound by residues 226-228 (AGE), Asn-296, His-297, and Glu-356.

Belongs to the class V-like SAM-binding methyltransferase superfamily. Histone-lysine methyltransferase family. SET7 subfamily. As to quaternary structure, interacts with IPF1/PDX-1. In terms of tissue distribution, widely expressed. Expressed in pancreatic islets.

The protein resides in the nucleus. The protein localises to the chromosome. It catalyses the reaction L-lysyl(4)-[histone H3] + S-adenosyl-L-methionine = N(6)-methyl-L-lysyl(4)-[histone H3] + S-adenosyl-L-homocysteine + H(+). The enzyme catalyses L-lysyl-[protein] + S-adenosyl-L-methionine = N(6)-methyl-L-lysyl-[protein] + S-adenosyl-L-homocysteine + H(+). In terms of biological role, histone methyltransferase that specifically monomethylates 'Lys-4' of histone H3. H3 'Lys-4' methylation represents a specific tag for epigenetic transcriptional activation. Plays a central role in the transcriptional activation of genes such as collagenase or insulin. Recruited by IPF1/PDX-1 to the insulin promoter, leading to activate transcription. Also has methyltransferase activity toward non-histone proteins such as CGAS, p53/TP53, TAF10, and possibly TAF7 by recognizing and binding the [KR]-[STA]-K in substrate proteins. Monomethylates 'Lys-189' of TAF10, leading to increase the affinity of TAF10 for RNA polymerase II. Monomethylates 'Lys-372' of p53/TP53, stabilizing p53/TP53 and increasing p53/TP53-mediated transcriptional activation. Monomethylates 'Lys-491' of CGAS, promoting interaction between SGF29 and CGAS. This is Histone-lysine N-methyltransferase SETD7 (SETD7) from Homo sapiens (Human).